The following is a 163-amino-acid chain: MHKKYFIGTSILIAVFVVIFDQVTKYIIATTMKIGDSFEVIPHFLNITSHRNNGAAWGILSGKMTFFFIITIIILIALVYFFINDAQYNLFMQVAISLLFAGALGNFIDRVLTGEVVDFIDTNIFGYDFPIFNIADSSLTIGVILIIIALLKDTSNKKEKEVK.

Helical transmembrane passes span 11 to 31 (ILIA…IATT), 64 to 84 (MTFF…FFIN), and 88 to 108 (YNLF…GNFI). Active-site residues include D118 and D136. A helical membrane pass occupies residues 131–151 (IFNIADSSLTIGVILIIIALL).

The protein belongs to the peptidase A8 family.

It localises to the cell membrane. The catalysed reaction is Release of signal peptides from bacterial membrane prolipoproteins. Hydrolyzes -Xaa-Yaa-Zaa-|-(S,diacylglyceryl)Cys-, in which Xaa is hydrophobic (preferably Leu), and Yaa (Ala or Ser) and Zaa (Gly or Ala) have small, neutral side chains.. Its pathway is protein modification; lipoprotein biosynthesis (signal peptide cleavage). In terms of biological role, this protein specifically catalyzes the removal of signal peptides from prolipoproteins. This chain is Lipoprotein signal peptidase, found in Staphylococcus aureus (strain bovine RF122 / ET3-1).